We begin with the raw amino-acid sequence, 275 residues long: 4-diphosphocytidyl-2-C-methyl-D-erythritol kinase (275 aa).

Lys-14 is an active-site residue. 94–104 (PMEAGLGGGSA) contributes to the ATP binding site. Asp-134 is a catalytic residue.

This sequence belongs to the GHMP kinase family. IspE subfamily.

It catalyses the reaction 4-CDP-2-C-methyl-D-erythritol + ATP = 4-CDP-2-C-methyl-D-erythritol 2-phosphate + ADP + H(+). It participates in isoprenoid biosynthesis; isopentenyl diphosphate biosynthesis via DXP pathway; isopentenyl diphosphate from 1-deoxy-D-xylulose 5-phosphate: step 3/6. Functionally, catalyzes the phosphorylation of the position 2 hydroxy group of 4-diphosphocytidyl-2C-methyl-D-erythritol. In Thermosipho africanus (strain TCF52B), this protein is 4-diphosphocytidyl-2-C-methyl-D-erythritol kinase.